The primary structure comprises 513 residues: ATP synthase subunit alpha (513 aa).

Position 171–178 (171–178 (GDRQIGKT)) interacts with ATP.

The protein belongs to the ATPase alpha/beta chains family. As to quaternary structure, F-type ATPases have 2 components, CF(1) - the catalytic core - and CF(0) - the membrane proton channel. CF(1) has five subunits: alpha(3), beta(3), gamma(1), delta(1), epsilon(1). CF(0) has three main subunits: a(1), b(2) and c(9-12). The alpha and beta chains form an alternating ring which encloses part of the gamma chain. CF(1) is attached to CF(0) by a central stalk formed by the gamma and epsilon chains, while a peripheral stalk is formed by the delta and b chains.

The protein localises to the cell inner membrane. It carries out the reaction ATP + H2O + 4 H(+)(in) = ADP + phosphate + 5 H(+)(out). In terms of biological role, produces ATP from ADP in the presence of a proton gradient across the membrane. The alpha chain is a regulatory subunit. The polypeptide is ATP synthase subunit alpha (Wolbachia sp. subsp. Drosophila simulans (strain wRi)).